A 626-amino-acid polypeptide reads, in one-letter code: Zinc finger protein 471 (626 aa).

One can recognise a KRAB domain in the interval V14–S85. 15 consecutive C2H2-type zinc fingers follow at residues F206–H228, Y234–H256, F262–H284, Y290–H312, Y318–H340, Y346–H369, F375–H397, Y403–H425, Y431–H453, Y459–H481, Y487–H509, Y515–H537, Y543–H565, Y571–H593, and Y599–H621.

This sequence belongs to the krueppel C2H2-type zinc-finger protein family.

The protein resides in the nucleus. Its function is as follows. May be involved in transcriptional regulation. This Homo sapiens (Human) protein is Zinc finger protein 471 (ZNF471).